The sequence spans 440 residues: Protein disulfide-isomerase A6 homolog (440 aa).

The N-terminal stretch at 1 to 18 (MALIKLLLASLAITSVCG) is a signal peptide. Thioredoxin domains follow at residues 19-131 (MYSK…AEAK) and 127-273 (LAEA…ARAQ). Active-site nucleophile residues include C54 and C57. A disulfide bridge links C54 with C57. The disordered stretch occupies residues 138 to 164 (LGGKSSGSSSSGSGSGSGKRGGGGSGN). Low complexity predominate over residues 139 to 149 (GGKSSGSSSSG). Gly residues predominate over residues 150–163 (SGSGSGKRGGGGSG). Catalysis depends on nucleophile residues C194 and C197. Residues C194 and C197 are joined by a disulfide bond. Residues 404–426 (DGFPKIQKTEKWDGKDGALPAED) are disordered. Residues 410 to 419 (QKTEKWDGKD) show a composition bias toward basic and acidic residues. Residues 437–440 (KTEL) carry the Prevents secretion from ER motif.

It belongs to the protein disulfide isomerase family.

Its subcellular location is the endoplasmic reticulum lumen. It catalyses the reaction Catalyzes the rearrangement of -S-S- bonds in proteins.. In terms of biological role, may function as a chaperone that inhibits aggregation of misfolded proteins. May negatively regulate the unfolded protein response (UPR) through binding to UPR sensors. The polypeptide is Protein disulfide-isomerase A6 homolog (Caenorhabditis elegans).